A 287-amino-acid polypeptide reads, in one-letter code: Mitochondrial glycine transporter A (287 aa).

Solcar repeat units follow at residues 7-97, 104-188, and 198-282; these read HPAV…LKQR, PGPL…TKHL, and YAPV…LMAQ. Helical transmembrane passes span 13 to 38, 72 to 98, 110 to 135, 163 to 186, 202 to 228, and 257 to 275; these read FMCG…TRLQ, GVSP…KQRY, VLLG…TRFE, GLMA…SQTK, ANFS…KTHI, and GAVP…AWTV.

This sequence belongs to the mitochondrial carrier (TC 2.A.29) family. SLC25A38 subfamily. At 24 hours post-fertilization, expressed predominantly in posterior blood island, posterior cardinal vein and circulating blood, as well as in somites, brain and retina. At 34 hours post-fertilization, becomes restricted to posterior blood island and circulating blood.

It localises to the mitochondrion inner membrane. The enzyme catalyses glycine(in) = glycine(out). Functionally, mitochondrial glycine transporter that imports glycine into the mitochondrial matrix. Plays an important role in providing glycine for the first enzymatic step in heme biosynthesis, the condensation of glycine with succinyl-CoA to produce 5-aminolevulinate (ALA) in the mitochondrial matrix. Required during erythropoiesis. May play a role as pro-apoptotic protein that induces caspase-dependent apoptosis. The protein is Mitochondrial glycine transporter A (slc25a38a) of Danio rerio (Zebrafish).